We begin with the raw amino-acid sequence, 780 residues long: Protein SEY1 (780 aa).

Topologically, residues 1-680 (MDSKEEAIQL…KRSMIKTTTH (680 aa)) are cytoplasmic. Residues 35–265 (GVNYHVISVF…NEDYYFKPEY (231 aa)) enclose the GB1/RHD3-type G domain. 45–52 (GSQSSGKS) is a binding site for GTP. Residues 440-463 (EVKEEVVKRFENDLKETSDKLRVT) are a coiled coil. Residues 681–701 (IPLWIYAIIVVLGWNEFMMVI) form a helical membrane-spanning segment. Residues 702-704 (RNP) are Lumenal-facing. The chain crosses the membrane as a helical span at residues 705-725 (LFVTLTILILVSFYFINKFDL). Topologically, residues 726 to 780 (WGPVKSVAQTAAGETIGTIKTKLRDFVLEEHEKTPKIQSEKSNSDSEKVVENEKS) are cytoplasmic. The tract at residues 756–780 (HEKTPKIQSEKSNSDSEKVVENEKS) is disordered.

The protein belongs to the TRAFAC class dynamin-like GTPase superfamily. GB1/RHD3 GTPase family. RHD3 subfamily.

The protein localises to the endoplasmic reticulum membrane. Its function is as follows. Cooperates with the reticulon proteins and tubule-shaping DP1 family proteins to generate and maintain the structure of the tubular endoplasmic reticulum network. Has GTPase activity, which is required for its function in ER organization. The protein is Protein SEY1 of Vanderwaltozyma polyspora (strain ATCC 22028 / DSM 70294 / BCRC 21397 / CBS 2163 / NBRC 10782 / NRRL Y-8283 / UCD 57-17) (Kluyveromyces polysporus).